A 375-amino-acid chain; its full sequence is Queuine tRNA-ribosyltransferase (375 aa).

Catalysis depends on D89, which acts as the Proton acceptor. Substrate contacts are provided by residues 89-93, D143, Q187, and G214; that span reads DSGGF. The segment at 245-251 is RNA binding; the sequence is GVGKPED. The Nucleophile role is filled by D264. The segment at 269–273 is RNA binding; important for wobble base 34 recognition; the sequence is TRNAR. C302, C304, C307, and H333 together coordinate Zn(2+).

Belongs to the queuine tRNA-ribosyltransferase family. As to quaternary structure, homodimer. Within each dimer, one monomer is responsible for RNA recognition and catalysis, while the other monomer binds to the replacement base PreQ1. Requires Zn(2+) as cofactor.

The enzyme catalyses 7-aminomethyl-7-carbaguanine + guanosine(34) in tRNA = 7-aminomethyl-7-carbaguanosine(34) in tRNA + guanine. It functions in the pathway tRNA modification; tRNA-queuosine biosynthesis. Catalyzes the base-exchange of a guanine (G) residue with the queuine precursor 7-aminomethyl-7-deazaguanine (PreQ1) at position 34 (anticodon wobble position) in tRNAs with GU(N) anticodons (tRNA-Asp, -Asn, -His and -Tyr). Catalysis occurs through a double-displacement mechanism. The nucleophile active site attacks the C1' of nucleotide 34 to detach the guanine base from the RNA, forming a covalent enzyme-RNA intermediate. The proton acceptor active site deprotonates the incoming PreQ1, allowing a nucleophilic attack on the C1' of the ribose to form the product. After dissociation, two additional enzymatic reactions on the tRNA convert PreQ1 to queuine (Q), resulting in the hypermodified nucleoside queuosine (7-(((4,5-cis-dihydroxy-2-cyclopenten-1-yl)amino)methyl)-7-deazaguanosine). The chain is Queuine tRNA-ribosyltransferase from Salmonella typhi.